The chain runs to 137 residues: Large ribosomal subunit protein uL14A (137 aa).

Serine 2 carries the N-acetylserine modification. Residues lysine 106 and lysine 110 each carry the N6,N6-dimethyllysine; by RKM1 modification.

It belongs to the universal ribosomal protein uL14 family. In terms of assembly, component of the large ribosomal subunit (LSU). Mature yeast ribosomes consist of a small (40S) and a large (60S) subunit. The 40S small subunit contains 1 molecule of ribosomal RNA (18S rRNA) and 33 different proteins (encoded by 57 genes). The large 60S subunit contains 3 rRNA molecules (25S, 5.8S and 5S rRNA) and 46 different proteins (encoded by 81 genes). In terms of processing, methylated by RKM1 at 2 different sites, but it is unclear which are the 2 methylated residues among Lys-40, Lys-106 and/or Lys-110.

The protein resides in the cytoplasm. Functionally, component of the ribosome, a large ribonucleoprotein complex responsible for the synthesis of proteins in the cell. The small ribosomal subunit (SSU) binds messenger RNAs (mRNAs) and translates the encoded message by selecting cognate aminoacyl-transfer RNA (tRNA) molecules. The large subunit (LSU) contains the ribosomal catalytic site termed the peptidyl transferase center (PTC), which catalyzes the formation of peptide bonds, thereby polymerizing the amino acids delivered by tRNAs into a polypeptide chain. The nascent polypeptides leave the ribosome through a tunnel in the LSU and interact with protein factors that function in enzymatic processing, targeting, and the membrane insertion of nascent chains at the exit of the ribosomal tunnel. This Saccharomyces cerevisiae (strain ATCC 204508 / S288c) (Baker's yeast) protein is Large ribosomal subunit protein uL14A.